Consider the following 1055-residue polypeptide: Bifunctional fucokinase/GDP-fucose pyrophosphorylase (1055 aa).

The interval Trp34 to Leu565 is GDP-fucose pyrophosphorylase. An L-fucokinase region spans residues Gly693–Ile1055. Pro826–Ile836 contacts ATP.

This sequence belongs to the GHMP kinase family. Mn(2+) serves as cofactor. Requires Mg(2+) as cofactor. As to expression, ubiquitous. Highest expression in flower buds.

It carries out the reaction L-fucose + ATP = beta-L-fucose 1-phosphate + ADP + H(+). It catalyses the reaction beta-L-fucose 1-phosphate + GTP + H(+) = GDP-beta-L-fucose + diphosphate. Functionally, bifunctional enzyme involved in the salvage pathway which converts free L-fucose to GDP-L-fucose. Catalyzes two successive reactions, the ATP-dependent phosphorylation of L-fucose to L-fucose 1-phosphate, and its guanylylation to GDP-L-fucose. The sugar-1-kinase activity has a strict substrate specificity for L-fucose and ATP. The pyrophosphorylase activity has a strict substrate specificity for L-fucose 1-phosphate and GTP. The protein is Bifunctional fucokinase/GDP-fucose pyrophosphorylase (FKGP) of Arabidopsis thaliana (Mouse-ear cress).